The following is a 397-amino-acid chain: Golgi-associated RAB2 interactor protein 2 (397 aa).

2 disordered regions span residues 1 to 24 (MKKSNRKSPTRIDEKDDICVPDSK) and 342 to 397 (QTTL…KLLN). Basic and acidic residues-rich tracts occupy residues 10–24 (TRIDEKDDICVPDSK), 353–369 (EKSKEMSDRPREIRTMD), and 376–397 (KAEEPRSRRTDSDTSDKCKLLN).

The protein belongs to the GARIN family. As to quaternary structure, interacts with CALM1.

Its subcellular location is the cell projection. The protein localises to the cilium. It is found in the flagellum. Seems to play a role in sperm motility. The protein is Golgi-associated RAB2 interactor protein 2 (GARIN2) of Bos taurus (Bovine).